The sequence spans 154 residues: Myoglobin (154 aa).

One can recognise a Globin domain in the interval Gly2–Lys148. Ser4 carries the phosphoserine modification. A nitrite-binding site is contributed by His65. His65 is a binding site for O2. At Thr68 the chain carries Phosphothreonine. His94 is a binding site for heme b.

It belongs to the globin family. Monomeric.

It localises to the cytoplasm. The protein localises to the sarcoplasm. The enzyme catalyses Fe(III)-heme b-[protein] + nitric oxide + H2O = Fe(II)-heme b-[protein] + nitrite + 2 H(+). It catalyses the reaction H2O2 + AH2 = A + 2 H2O. Monomeric heme protein which primary function is to store oxygen and facilitate its diffusion within muscle tissues. Reversibly binds oxygen through a pentacoordinated heme iron and enables its timely and efficient release as needed during periods of heightened demand. Depending on the oxidative conditions of tissues and cells, and in addition to its ability to bind oxygen, it also has a nitrite reductase activity whereby it regulates the production of bioactive nitric oxide. Under stress conditions, like hypoxia and anoxia, it also protects cells against reactive oxygen species thanks to its pseudoperoxidase activity. The protein is Myoglobin (MB) of Callithrix jacchus (White-tufted-ear marmoset).